The primary structure comprises 118 residues: NADH-quinone oxidoreductase subunit A 2 (118 aa).

3 consecutive transmembrane segments (helical) span residues 5–25 (YLPILVLVVIAVLFGLGSVIF), 62–82 (LIAMLFILFDIEAVFLYPWAV), and 87–107 (LGMFGLIEMGVFIVILFVGYV).

The protein belongs to the complex I subunit 3 family. As to quaternary structure, NDH-1 is composed of 14 different subunits. Subunits NuoA, H, J, K, L, M, N constitute the membrane sector of the complex.

It localises to the cell inner membrane. The catalysed reaction is a quinone + NADH + 5 H(+)(in) = a quinol + NAD(+) + 4 H(+)(out). Functionally, NDH-1 shuttles electrons from NADH, via FMN and iron-sulfur (Fe-S) centers, to quinones in the respiratory chain. The immediate electron acceptor for the enzyme in this species is believed to be ubiquinone. Couples the redox reaction to proton translocation (for every two electrons transferred, four hydrogen ions are translocated across the cytoplasmic membrane), and thus conserves the redox energy in a proton gradient. This Citrifermentans bemidjiense (strain ATCC BAA-1014 / DSM 16622 / JCM 12645 / Bem) (Geobacter bemidjiensis) protein is NADH-quinone oxidoreductase subunit A 2.